Reading from the N-terminus, the 132-residue chain is Agouti-signaling protein (132 aa).

An N-terminal signal peptide occupies residues 1–22 (MDVTRLLLATLLVFLCFFTVYS). Asn39 is a glycosylation site (N-linked (GlcNAc...) asparagine). Positions 62–88 (ISRKEAEKKRSSKKEASMKKVAQPRTP) are disordered. Residues 63 to 79 (SRKEAEKKRSSKKEASM) are compositionally biased toward basic and acidic residues. Intrachain disulfides connect Cys93-Cys108, Cys100-Cys114, Cys107-Cys125, Cys111-Cys132, and Cys116-Cys123. In terms of domain architecture, Agouti spans 93–132 (CVATRYSCKPPAPACCDPCASCQCRFFRSACSCRVLRLNC).

It is found in the secreted. In terms of biological role, involved in the regulation of melanogenesis. The binding of ASP to MC1R precludes alpha-MSH initiated signaling and thus blocks production of cAMP, leading to a down-regulation of eumelanogenesis (brown/black pigment) and thus increasing synthesis of pheomelanin (yellow/red pigment). This Semnopithecus entellus (Northern plains gray langur) protein is Agouti-signaling protein (ASIP).